A 1323-amino-acid chain; its full sequence is PH domain leucine-rich repeat-containing protein phosphatase 2 (1323 aa).

One can recognise a PH domain in the interval 150–248 (RILLSGIYNV…WQRQASKVVS (99 aa)). LRR repeat units follow at residues 250-271 (RIST…LFYS), 273-296 (DITY…DTLY), 300-321 (QLKG…LCEI), 323-344 (TLTE…IGNL), 346-368 (NLQT…GNLQ), 369-390 (QLSS…YEKL), 392-412 (MLDR…GVLN), 416-439 (HIKH…EGNK), 440-460 (HITH…SSLC), 461-480 (SLEQ…LSGF), 481-502 (SLRT…PVPS), 503-524 (LLTF…ACEA), 526-547 (KIEV…ILSS), 549-570 (SLRK…VEHI), 571-592 (PLEV…LFSK), 595-616 (NLRY…CTGE), 621-644 (MLQL…VGHL), 645-666 (HLRI…KLNK), 669-690 (QLEE…IANC), 692-713 (RLHT…LQLP), 714-735 (QIQF…EALP), and 737-758 (TLQD…TLDI). Residues 785-1033 (SHGLAEMAGQ…DNVGAMVVYL (249 aa)) form the PPM-type phosphatase domain. 4 residues coordinate Mn(2+): Asp-820, Gly-821, Lys-985, and Asp-1024. The disordered stretch occupies residues 1060–1157 (TIKDAPKPAT…DSDDDQPVEG (98 aa)). Low complexity predominate over residues 1071 to 1097 (SSSSGIASEFSSEMSTSEVSSEVGSTA). Over residues 1122 to 1146 (PTPTSGLFQRQPSSATFSSNQSDNG) the composition is skewed to polar residues. Phosphoserine is present on Ser-1210. The segment at 1285–1323 (HDLEEEVKEQMKQHQDSRLEPEPHEEDRTEPPEEFDTAL) is disordered. A compositionally biased stretch (basic and acidic residues) spans 1292–1315 (KEQMKQHQDSRLEPEPHEEDRTEP).

Interacts with AKT1, AKT3 and PRKCB isoform beta-II. Interacts with STK4, RPS6KB1, RAF1. Interacts with FKBP5; FKBP5 acts as a scaffold for PHLPP2 and Akt. Interacts with NHERF1; NHERF1 scaffolds a heterotrimeric complex with PTEN. Mn(2+) serves as cofactor. In colorectal cancer tissue, expression is highest in the surface epithelium of normal colonic mucosa adjacent to the cancer tissue but is largely excluded from the crypt bases. Expression is lost or significantly decreased in 80% of tested tumors (at protein level).

The protein localises to the cytoplasm. Its subcellular location is the membrane. It localises to the nucleus. The catalysed reaction is O-phospho-L-seryl-[protein] + H2O = L-seryl-[protein] + phosphate. The enzyme catalyses O-phospho-L-threonyl-[protein] + H2O = L-threonyl-[protein] + phosphate. Inhibited by AKT1, AKT2 and AKT3. Activated by oleic acid and arachidonic acid. In terms of biological role, protein phosphatase involved in regulation of Akt and PKC signaling. Mediates dephosphorylation in the C-terminal domain hydrophobic motif of members of the AGC Ser/Thr protein kinase family; specifically acts on 'Ser-473' of AKT1, 'Ser-660' of PRKCB isoform beta-II and 'Ser-657' of PRKCA. Akt regulates the balance between cell survival and apoptosis through a cascade that primarily alters the function of transcription factors that regulate pro- and antiapoptotic genes. Dephosphorylation of 'Ser-473' of Akt triggers apoptosis and decreases cell proliferation. Also controls the phosphorylation of AKT3. Dephosphorylates STK4 on 'Thr-387' leading to STK4 activation and apoptosis. Dephosphorylates RPS6KB1 and is involved in regulation of cap-dependent translation. Inhibits cancer cell proliferation and may act as a tumor suppressor. Dephosphorylation of PRKCA and PRKCB leads to their destabilization and degradation. Dephosphorylates RAF1 inhibiting its kinase activity. The protein is PH domain leucine-rich repeat-containing protein phosphatase 2 (PHLPP2) of Homo sapiens (Human).